We begin with the raw amino-acid sequence, 98 residues long: C-X-C motif chemokine 10 (98 aa).

Residues 1–21 (MNQTAILICCLIFLTLSGIQG) form the signal peptide. Arg26 carries the citrulline; by PAD2 modification. 2 cysteine pairs are disulfide-bonded: Cys30/Cys57 and Cys32/Cys74.

The protein belongs to the intercrine alpha (chemokine CxC) family. Monomer, dimer, and tetramer. Interacts with CXCR3 (via N-terminus). In terms of processing, several proteases can mediate post-secretion cleavages. DPP4 cleaves CXCL10 on its N-terminal 2 amino acids leading to an antagonist form of CXCL10. This dominant negative form is capable of binding CXCR3 but does not induce signaling. MMP9 cleaves 9 amino acids instead. In terms of tissue distribution, mainly secreted by monocytes, endothelial cells as well as fibroblasts. Expressed by epithelial cells in thymus. Microglial cells produce CXCL10 in response to viral stimulation.

It is found in the secreted. Its function is as follows. Pro-inflammatory cytokine that is involved in a wide variety of processes such as chemotaxis, differentiation, and activation of peripheral immune cells, regulation of cell growth, apoptosis and modulation of angiostatic effects. Plays thereby an important role during viral infections by stimulating the activation and migration of immune cells to the infected sites. Mechanistically, binding of CXCL10 to the CXCR3 receptor activates G protein-mediated signaling and results in downstream activation of phospholipase C-dependent pathway, an increase in intracellular calcium production and actin reorganization. In turn, recruitment of activated Th1 lymphocytes occurs at sites of inflammation. Activation of the CXCL10/CXCR3 axis also plays an important role in neurons in response to brain injury for activating microglia, the resident macrophage population of the central nervous system, and directing them to the lesion site. This recruitment is an essential element for neuronal reorganization. This chain is C-X-C motif chemokine 10 (CXCL10), found in Homo sapiens (Human).